We begin with the raw amino-acid sequence, 228 residues long: 5'-methylthioadenosine/S-adenosylhomocysteine nucleosidase (228 aa).

Catalysis depends on Glu-11, which acts as the Proton acceptor. Substrate contacts are provided by residues Gly-77, Ile-151, and 172–173; that span reads ME. The active-site Proton donor is Asp-196.

It belongs to the PNP/UDP phosphorylase family. MtnN subfamily.

The catalysed reaction is S-adenosyl-L-homocysteine + H2O = S-(5-deoxy-D-ribos-5-yl)-L-homocysteine + adenine. It carries out the reaction S-methyl-5'-thioadenosine + H2O = 5-(methylsulfanyl)-D-ribose + adenine. It catalyses the reaction 5'-deoxyadenosine + H2O = 5-deoxy-D-ribose + adenine. It participates in amino-acid biosynthesis; L-methionine biosynthesis via salvage pathway; S-methyl-5-thio-alpha-D-ribose 1-phosphate from S-methyl-5'-thioadenosine (hydrolase route): step 1/2. In terms of biological role, catalyzes the irreversible cleavage of the glycosidic bond in both 5'-methylthioadenosine (MTA) and S-adenosylhomocysteine (SAH/AdoHcy) to adenine and the corresponding thioribose, 5'-methylthioribose and S-ribosylhomocysteine, respectively. Also cleaves 5'-deoxyadenosine, a toxic by-product of radical S-adenosylmethionine (SAM) enzymes, into 5-deoxyribose and adenine. In Staphylococcus aureus (strain JH1), this protein is 5'-methylthioadenosine/S-adenosylhomocysteine nucleosidase.